A 570-amino-acid polypeptide reads, in one-letter code: Pleckstrin homology domain-containing family D member 1 (570 aa).

The segment covering methionine 1 to lysine 13 has biased composition (basic and acidic residues). Residues methionine 1–lysine 42 are disordered. The span at proline 23 to serine 34 shows a compositional bias: pro residues. The region spanning glycine 83–lysine 192 is the PH domain. The stretch at glutamate 202–glutamate 448 forms a coiled coil. The segment covering serine 542–arginine 551 has biased composition (basic residues). The disordered stretch occupies residues serine 542–leucine 570. The span at proline 561–leucine 570 shows a compositional bias: basic and acidic residues.

Belongs to the PLEKHD1 family.

This chain is Pleckstrin homology domain-containing family D member 1, found in Caenorhabditis elegans.